The chain runs to 244 residues: Chalcone--flavanone isomerase (244 aa).

The substrate site is built by Thr57, Asn122, and Ser199.

It belongs to the chalcone isomerase family.

It carries out the reaction a chalcone = a flavanone.. The protein operates within secondary metabolite biosynthesis; flavonoid biosynthesis. Functionally, catalyzes the intramolecular cyclization of bicyclic chalcones into tricyclic (S)-flavanones. Responsible for the isomerization of 4,2',4',6'-tetrahydroxychalcone (also termed chalcone) into naringenin. The protein is Chalcone--flavanone isomerase (CHI) of Arabidopsis lyrata subsp. petraea (Northern rock-cress).